The primary structure comprises 329 residues: Red chlorophyll catabolite reductase 1, chloroplastic (329 aa).

Residues 1–11 (MLQLRSPPPAT) show a composition bias toward pro residues. The transit peptide at 1-50 (MLQLRSPPPATSSPSSAVSFPTLAPRLLPLRRRRRGAGSQLGGKTSSAVR) directs the protein to the chloroplast. The tract at residues 1-61 (MLQLRSPPPA…SSAAAPGATE (61 aa)) is disordered. Low complexity-rich tracts occupy residues 12-28 (SSPS…PRLL) and 46-59 (SSAV…APGA). Red chlorophyll catabolite contacts are provided by residues glutamate 163, 216 to 218 (YRS), and aspartate 299.

Expressed in leaves. Expressed at low levels in roots, stems, panicles and seeds.

The protein resides in the plastid. Its subcellular location is the chloroplast. The enzyme catalyses primary fluorescent chlorophyll catabolite + 2 oxidized [2Fe-2S]-[ferredoxin] = red chlorophyll catabolite + 2 reduced [2Fe-2S]-[ferredoxin] + 3 H(+). It participates in porphyrin-containing compound metabolism; chlorophyll degradation. Catalyzes the key reaction of chlorophyll catabolism, porphyrin macrocycle cleavage of pheophorbide a (pheide a) to a primary fluorescent catabolite (pFCC). Works in a two-step reaction with pheophorbide a oxygenase (PaO) by reducing the C20/C1 double bond of the intermediate, RCC. Belongs to the chlorophyll catabolic enzymes (CCEs). May play a role in senescence and response to wounding. The protein is Red chlorophyll catabolite reductase 1, chloroplastic of Oryza sativa subsp. japonica (Rice).